A 491-amino-acid polypeptide reads, in one-letter code: Ketol-acid reductoisomerase (NADP(+)) (491 aa).

Residues Ala15 to Ser208 enclose the KARI N-terminal Rossmann domain. Residues Cys45–Gln48, Arg68, Arg76, Ser78, and Asp108–Gln110 each bind NADP(+). His132 is an active-site residue. Residue Gly158 participates in NADP(+) binding. 2 KARI C-terminal knotted domains span residues Ser209–Gln344 and Phe345–Met484. 4 residues coordinate Mg(2+): Asp217, Glu221, Glu389, and Glu393. Residue Ser414 coordinates substrate.

Belongs to the ketol-acid reductoisomerase family. The cofactor is Mg(2+).

It carries out the reaction (2R)-2,3-dihydroxy-3-methylbutanoate + NADP(+) = (2S)-2-acetolactate + NADPH + H(+). The catalysed reaction is (2R,3R)-2,3-dihydroxy-3-methylpentanoate + NADP(+) = (S)-2-ethyl-2-hydroxy-3-oxobutanoate + NADPH + H(+). It participates in amino-acid biosynthesis; L-isoleucine biosynthesis; L-isoleucine from 2-oxobutanoate: step 2/4. Its pathway is amino-acid biosynthesis; L-valine biosynthesis; L-valine from pyruvate: step 2/4. In terms of biological role, involved in the biosynthesis of branched-chain amino acids (BCAA). Catalyzes an alkyl-migration followed by a ketol-acid reduction of (S)-2-acetolactate (S2AL) to yield (R)-2,3-dihydroxy-isovalerate. In the isomerase reaction, S2AL is rearranged via a Mg-dependent methyl migration to produce 3-hydroxy-3-methyl-2-ketobutyrate (HMKB). In the reductase reaction, this 2-ketoacid undergoes a metal-dependent reduction by NADPH to yield (R)-2,3-dihydroxy-isovalerate. The sequence is that of Ketol-acid reductoisomerase (NADP(+)) from Salmonella schwarzengrund (strain CVM19633).